Reading from the N-terminus, the 172-residue chain is Endoribonuclease YbeY (172 aa).

The Zn(2+) site is built by histidine 136, histidine 140, and histidine 146.

It belongs to the endoribonuclease YbeY family. Zn(2+) serves as cofactor.

The protein resides in the cytoplasm. Its function is as follows. Single strand-specific metallo-endoribonuclease involved in late-stage 70S ribosome quality control and in maturation of the 3' terminus of the 16S rRNA. The sequence is that of Endoribonuclease YbeY from Rickettsia canadensis (strain McKiel).